Reading from the N-terminus, the 71-residue chain is DNA-directed RNA polymerase subunit omega (71 aa).

Belongs to the RNA polymerase subunit omega family. The RNAP catalytic core consists of 2 alpha, 1 beta, 1 beta' and 1 omega subunit. When a sigma factor is associated with the core the holoenzyme is formed, which can initiate transcription.

The enzyme catalyses RNA(n) + a ribonucleoside 5'-triphosphate = RNA(n+1) + diphosphate. Functionally, promotes RNA polymerase assembly. Latches the N- and C-terminal regions of the beta' subunit thereby facilitating its interaction with the beta and alpha subunits. The sequence is that of DNA-directed RNA polymerase subunit omega from Levilactobacillus brevis (strain ATCC 367 / BCRC 12310 / CIP 105137 / JCM 1170 / LMG 11437 / NCIMB 947 / NCTC 947) (Lactobacillus brevis).